We begin with the raw amino-acid sequence, 376 residues long: Growth/differentiation factor 8 (376 aa).

An N-terminal signal peptide occupies residues Met1–Ser22. A propeptide spanning residues Asp23–Arg267 is cleaved from the precursor. Disulfide bonds link Cys273–Cys283, Cys282–Cys341, Cys310–Cys373, and Cys314–Cys375.

Belongs to the TGF-beta family. In terms of assembly, homodimer; disulfide-linked. In terms of tissue distribution, highly expressed in muscle. Also expressed in other tissues such as eye, gill, ovary, gut and brain. Very low level detected in testis. Not expressed in liver, kidney, stomach or heart.

The protein localises to the secreted. Its function is as follows. Acts specifically as a negative regulator of skeletal muscle growth. The protein is Growth/differentiation factor 8 of Oreochromis mossambicus (Mozambique tilapia).